Here is a 78-residue protein sequence, read N- to C-terminus: MATGTPAAELRELSEDELVTRLRESKEELFNLRFQMATGQMDNNRRLRTVRHEIARIYTVLRERELGLAVGPDAGDAA.

Belongs to the universal ribosomal protein uL29 family.

The chain is Large ribosomal subunit protein uL29 from Rhodococcus erythropolis (strain PR4 / NBRC 100887).